We begin with the raw amino-acid sequence, 740 residues long: Ion-translocating oxidoreductase complex subunit C (740 aa).

2 4Fe-4S ferredoxin-type domains span residues 369 to 397 (GEPQ…QQLY) and 407 to 436 (KATT…VQYF). Residues Cys377, Cys380, Cys383, Cys387, Cys416, Cys419, Cys422, and Cys426 each contribute to the [4Fe-4S] cluster site. The disordered stretch occupies residues 602–718 (KLEQQQANAE…EEQVDPRKAA (117 aa)).

It belongs to the 4Fe4S bacterial-type ferredoxin family. RnfC subfamily. The complex is composed of six subunits: RsxA, RsxB, RsxC, RsxD, RsxE and RsxG. The cofactor is [4Fe-4S] cluster.

It is found in the cell inner membrane. Functionally, part of a membrane-bound complex that couples electron transfer with translocation of ions across the membrane. Required to maintain the reduced state of SoxR. The sequence is that of Ion-translocating oxidoreductase complex subunit C from Shigella sonnei (strain Ss046).